The primary structure comprises 340 residues: MAITVYYDKDCDLNLIQSKKVAIIGFGSQGHAHAMNLRDNGVNVIIGLREGSVSAVKAKNAGFEVMSASEASKMADVIMILAPDEIQADIFNVEIKPNLSEGKAIAFAHGFNIHYGQIVVPKGVDVIMIAPKAPGHTVRNEFTLGGGTPCLIAIHQDESKNAKNLALSYASAIGGGRTGIIETTFKAETETDLFGEQAVLCGGLSALIQAGFETLVEAGYEPEMAYFECLHEMKLIVDLIYQGGIADMRYSISNTAEYGDYITGSKIITEETKKAMKGVLKDIQNGVFAKDFILERRAGFARMHAERKNMNDSLIEKTGRNLRAMMPWISAKKLVDKDKN.

Residues 1 to 183 (MAITVYYDKD…GGGRTGIIET (183 aa)) enclose the KARI N-terminal Rossmann domain. NADP(+)-binding positions include 26–29 (FGSQ), Arg49, Ser52, Ser54, and 84–87 (DEIQ). His109 is a catalytic residue. Gly135 lines the NADP(+) pocket. The region spanning 184–329 (TFKAETETDL…RNLRAMMPWI (146 aa)) is the KARI C-terminal knotted domain. Residues Asp192, Glu196, Glu228, and Glu232 each coordinate Mg(2+). Ser253 serves as a coordination point for substrate.

Belongs to the ketol-acid reductoisomerase family. It depends on Mg(2+) as a cofactor.

It carries out the reaction (2R)-2,3-dihydroxy-3-methylbutanoate + NADP(+) = (2S)-2-acetolactate + NADPH + H(+). It catalyses the reaction (2R,3R)-2,3-dihydroxy-3-methylpentanoate + NADP(+) = (S)-2-ethyl-2-hydroxy-3-oxobutanoate + NADPH + H(+). It participates in amino-acid biosynthesis; L-isoleucine biosynthesis; L-isoleucine from 2-oxobutanoate: step 2/4. Its pathway is amino-acid biosynthesis; L-valine biosynthesis; L-valine from pyruvate: step 2/4. Its function is as follows. Involved in the biosynthesis of branched-chain amino acids (BCAA). Catalyzes an alkyl-migration followed by a ketol-acid reduction of (S)-2-acetolactate (S2AL) to yield (R)-2,3-dihydroxy-isovalerate. In the isomerase reaction, S2AL is rearranged via a Mg-dependent methyl migration to produce 3-hydroxy-3-methyl-2-ketobutyrate (HMKB). In the reductase reaction, this 2-ketoacid undergoes a metal-dependent reduction by NADPH to yield (R)-2,3-dihydroxy-isovalerate. This chain is Ketol-acid reductoisomerase (NADP(+)), found in Campylobacter jejuni subsp. doylei (strain ATCC BAA-1458 / RM4099 / 269.97).